Here is a 176-residue protein sequence, read N- to C-terminus: Large ribosomal subunit protein uL6 (176 aa).

It belongs to the universal ribosomal protein uL6 family. Part of the 50S ribosomal subunit.

In terms of biological role, this protein binds to the 23S rRNA, and is important in its secondary structure. It is located near the subunit interface in the base of the L7/L12 stalk, and near the tRNA binding site of the peptidyltransferase center. The protein is Large ribosomal subunit protein uL6 of Burkholderia multivorans (strain ATCC 17616 / 249).